A 418-amino-acid polypeptide reads, in one-letter code: MAARLPACVVDCGTGYTKLGYAGNTEPQFIIPSCIAIKESAKVGDQAQRRLMKGVDDLDFHIGDEAIDKPTYATKWPIRHGIVEDWDLMERFMEQVIFKYLRAEPEDHYFLLTEPPLNTPENREYTAEIMFESFNVPGLYIAVQAVLALAASWTSRQVGERTLTGTVIDSGDGVTHVIPVAEGYVIGSCIKHIPIAGRDITYFTQQLLRDREVGIPPEQSLETAKAVKERFSYVCPDLVKEFSKYDTDGAKWIKQYTGVNAVSKKEFSIDVGYERFLGPEIFFHPEFANPDFTQPISEVVDEVIQNCPIDVRRPLYKNIVLSGGSTMFRDFGRRLQRDVKRTVDARLKLSEELSGGRLKPKPIDVQVITHHMQRYAVWFGGSMLASTPEFYQVCHTKKDYEEIGPSICRHNPVFGVMS.

Belongs to the actin family. ARP3 subfamily. Component of the Arp2/3 complex composed of actr2/arp2, actr3/arp3, arpc1 (arpc1a or arpc1b), arpc2, arpc3, arpc4 and arpc5.

The protein localises to the cytoplasm. Its subcellular location is the cytoskeleton. It localises to the cell projection. It is found in the nucleus. In terms of biological role, ATP-binding component of the Arp2/3 complex, a multiprotein complex that mediates actin polymerization upon stimulation by nucleation-promoting factor (NPF). The Arp2/3 complex mediates the formation of branched actin networks in the cytoplasm, providing the force for cell motility. Seems to contact the pointed end of the daughter actin filament. In addition to its role in the cytoplasmic cytoskeleton, the Arp2/3 complex also promotes actin polymerization in the nucleus, thereby regulating gene transcription and repair of damaged DNA. The Arp2/3 complex promotes homologous recombination (HR) repair in response to DNA damage by promoting nuclear actin polymerization, leading to drive motility of double-strand breaks (DSBs). This Xenopus laevis (African clawed frog) protein is Actin-related protein 3-B (actr3-b).